A 58-amino-acid chain; its full sequence is Large ribosomal subunit protein uL30 (58 aa).

The protein belongs to the universal ribosomal protein uL30 family. In terms of assembly, part of the 50S ribosomal subunit.

The chain is Large ribosomal subunit protein uL30 from Zymomonas mobilis subsp. mobilis (strain ATCC 31821 / ZM4 / CP4).